We begin with the raw amino-acid sequence, 355 residues long: NADH-quinone oxidoreductase subunit H (355 aa).

8 helical membrane passes run 25-45 (LVRI…LILW), 91-111 (WLYL…WAVI), 126-146 (LLYA…AGWA), 170-190 (MGFA…SEIV), 205-225 (FLSW…VSGI), 253-273 (MAFA…SALA), 290-310 (FIPG…VFIW), and 330-350 (VFLP…MSPL).

It belongs to the complex I subunit 1 family. In terms of assembly, NDH-1 is composed of 14 different subunits. Subunits NuoA, H, J, K, L, M, N constitute the membrane sector of the complex.

The protein localises to the cell inner membrane. The enzyme catalyses a quinone + NADH + 5 H(+)(in) = a quinol + NAD(+) + 4 H(+)(out). NDH-1 shuttles electrons from NADH, via FMN and iron-sulfur (Fe-S) centers, to quinones in the respiratory chain. The immediate electron acceptor for the enzyme in this species is believed to be ubiquinone. Couples the redox reaction to proton translocation (for every two electrons transferred, four hydrogen ions are translocated across the cytoplasmic membrane), and thus conserves the redox energy in a proton gradient. This subunit may bind ubiquinone. In Burkholderia vietnamiensis (strain G4 / LMG 22486) (Burkholderia cepacia (strain R1808)), this protein is NADH-quinone oxidoreductase subunit H.